Here is an 88-residue protein sequence, read N- to C-terminus: Small ribosomal subunit protein bS20 (88 aa).

The protein belongs to the bacterial ribosomal protein bS20 family.

Functionally, binds directly to 16S ribosomal RNA. The protein is Small ribosomal subunit protein bS20 of Blochmanniella floridana.